Here is a 280-residue protein sequence, read N- to C-terminus: Bifunctional protein FolD (280 aa).

Residues Gly159–Ser161, Ser184, and Ile225 contribute to the NADP(+) site.

The protein belongs to the tetrahydrofolate dehydrogenase/cyclohydrolase family. Homodimer.

The enzyme catalyses (6R)-5,10-methylene-5,6,7,8-tetrahydrofolate + NADP(+) = (6R)-5,10-methenyltetrahydrofolate + NADPH. It catalyses the reaction (6R)-5,10-methenyltetrahydrofolate + H2O = (6R)-10-formyltetrahydrofolate + H(+). It functions in the pathway one-carbon metabolism; tetrahydrofolate interconversion. In terms of biological role, catalyzes the oxidation of 5,10-methylenetetrahydrofolate to 5,10-methenyltetrahydrofolate and then the hydrolysis of 5,10-methenyltetrahydrofolate to 10-formyltetrahydrofolate. The protein is Bifunctional protein FolD of Methanosphaerula palustris (strain ATCC BAA-1556 / DSM 19958 / E1-9c).